The following is a 437-amino-acid chain: MEQFNAFKSLLKKHYEKTIGFHDKYIKDINRFVFKNNVLLILLENEFARNSLNDNSEIIHLAESLYEGIKSVNFVNEQDFFFNLAKLEENSRDTLYQNSGLSKNYTFQNFVISEGNKRAYEAGVRLAETQDNEFSPLFIYGETGLGKTHLLQAIGNEKFRNFPNARVKYVVSSDFAQEVVDAFYQRDKGIEKLKKNYENLDLVLIDDTQIFGRKEKTLEILFNIFNNLVLNKKQIVLVSDKAPDELIDIDARMISRFKSGLLLKIEKHNLSSLCEILTVKLKEKDPNIQITNEARHDAAQISGNDVRALNGIATKLLFFAKTSKQNLINTENLKEILFEEFEKFHKKSFDPYLLIENVCRRFNVPMDSVLSENRKAELVRVRDVCNYLLRQKYNMQFQQIGKIFKRSHSSVLMAVKRVAKMIENDSSLRDVITSLVI.

The tract at residues 1-72 (MEQFNAFKSL…ESLYEGIKSV (72 aa)) is domain I, interacts with DnaA modulators. Residues 72–99 (VNFVNEQDFFFNLAKLEENSRDTLYQNS) are domain II. Positions 100-320 (GLSKNYTFQN…GIATKLLFFA (221 aa)) are domain III, AAA+ region. ATP is bound by residues G144, G146, K147, and T148. The tract at residues 321 to 437 (KTSKQNLINT…LRDVITSLVI (117 aa)) is domain IV, binds dsDNA.

This sequence belongs to the DnaA family. Oligomerizes as a right-handed, spiral filament on DNA at oriC.

The protein resides in the cytoplasm. Plays an essential role in the initiation and regulation of chromosomal replication. ATP-DnaA binds to the origin of replication (oriC) to initiate formation of the DNA replication initiation complex once per cell cycle. Binds the DnaA box (a 9 base pair repeat at the origin) and separates the double-stranded (ds)DNA. Forms a right-handed helical filament on oriC DNA; dsDNA binds to the exterior of the filament while single-stranded (ss)DNA is stabiized in the filament's interior. The ATP-DnaA-oriC complex binds and stabilizes one strand of the AT-rich DNA unwinding element (DUE), permitting loading of DNA polymerase. After initiation quickly degrades to an ADP-DnaA complex that is not apt for DNA replication. Binds acidic phospholipids. This chain is Chromosomal replication initiator protein DnaA, found in Mycoplasma genitalium (strain ATCC 33530 / DSM 19775 / NCTC 10195 / G37) (Mycoplasmoides genitalium).